Reading from the N-terminus, the 188-residue chain is ATP synthase subunit delta (188 aa).

This sequence belongs to the ATPase delta chain family. As to quaternary structure, F-type ATPases have 2 components, F(1) - the catalytic core - and F(0) - the membrane proton channel. F(1) has five subunits: alpha(3), beta(3), gamma(1), delta(1), epsilon(1). F(0) has three main subunits: a(1), b(2) and c(10-14). The alpha and beta chains form an alternating ring which encloses part of the gamma chain. F(1) is attached to F(0) by a central stalk formed by the gamma and epsilon chains, while a peripheral stalk is formed by the delta and b chains.

The protein localises to the cell inner membrane. Functionally, f(1)F(0) ATP synthase produces ATP from ADP in the presence of a proton or sodium gradient. F-type ATPases consist of two structural domains, F(1) containing the extramembraneous catalytic core and F(0) containing the membrane proton channel, linked together by a central stalk and a peripheral stalk. During catalysis, ATP synthesis in the catalytic domain of F(1) is coupled via a rotary mechanism of the central stalk subunits to proton translocation. This protein is part of the stalk that links CF(0) to CF(1). It either transmits conformational changes from CF(0) to CF(1) or is implicated in proton conduction. The sequence is that of ATP synthase subunit delta from Rhizobium meliloti (strain 1021) (Ensifer meliloti).